We begin with the raw amino-acid sequence, 357 residues long: Protein-glutamate methylesterase/protein-glutamine glutaminase (357 aa).

The 118-residue stretch at 3 to 120 (RVLVVDDSAF…SLDLYKIKEQ (118 aa)) folds into the Response regulatory domain. D54 carries the post-translational modification 4-aspartylphosphate. The CheB-type methylesterase domain occupies 161-355 (PGTGRQIVCI…ASITSCVKKE (195 aa)). Residues S173, H200, and D296 contribute to the active site.

Belongs to the CheB family. Phosphorylated by CheA. Phosphorylation of the N-terminal regulatory domain activates the methylesterase activity.

It localises to the cytoplasm. The enzyme catalyses [protein]-L-glutamate 5-O-methyl ester + H2O = L-glutamyl-[protein] + methanol + H(+). The catalysed reaction is L-glutaminyl-[protein] + H2O = L-glutamyl-[protein] + NH4(+). Involved in the modulation of the chemotaxis system; catalyzes the demethylation of specific methylglutamate residues introduced into the chemoreceptors (methyl-accepting chemotaxis proteins) by CheR. B.subtilis has an effective methylation-independent adaptation system but must utilize the methylation system for adaptation to high concentrations of attractant. In Bacillus subtilis (strain 168), this protein is Protein-glutamate methylesterase/protein-glutamine glutaminase.